A 248-amino-acid chain; its full sequence is Transcription factor MYB1 (248 aa).

HTH myb-type domains follow at residues 9 to 61 and 62 to 116; these read KEGM…LNYL and RPGI…GRRV. 2 consecutive DNA-binding regions (H-T-H motif) follow at residues 37-61 and 89-112; these read WRSLPKRAGLKRCGKSCRLRWLNYL and WSLIAGRLPGRTDNEIKNYWNTNL. Positions 118 to 144 are disordered; sequence DQSHQHCRPNPTITSTKPADAPPANAN.

The protein resides in the nucleus. In terms of biological role, transcription activator involved in the spatiotemporal regulation of flavonoid biosynthesis specifically in the corms of Montbretia. Activates the promoters of enzymes involved in the biosynthesis of the flavonol kaempferol and the flavonol-glycoside kaempferol-rhamnoside. The sequence is that of Transcription factor MYB1 from Crocosmia x crocosmiiflora (Montbretia).